A 197-amino-acid chain; its full sequence is RING-H2 finger protein ATL80 (197 aa).

Residues 30-50 (LVVILAALLCALICVLGLIAV) form a helical membrane-spanning segment. The RING-type; atypical zinc finger occupies 111–153 (CAICLAEFSAGDELRVLPQCGHGFHVACIDTWLGSHSSCPSCR). A disordered region spans residues 168-197 (PGSSSSGLESEPEIEIRIKQGEDDPNSFLP).

The protein belongs to the RING-type zinc finger family. ATL subfamily.

It is found in the membrane. The enzyme catalyses S-ubiquitinyl-[E2 ubiquitin-conjugating enzyme]-L-cysteine + [acceptor protein]-L-lysine = [E2 ubiquitin-conjugating enzyme]-L-cysteine + N(6)-ubiquitinyl-[acceptor protein]-L-lysine.. It functions in the pathway protein modification; protein ubiquitination. Its function is as follows. May be involved in the early steps of the plant defense signaling pathway. The protein is RING-H2 finger protein ATL80 (ATL80) of Arabidopsis thaliana (Mouse-ear cress).